The sequence spans 67 residues: MLTHVKFKRLKINAGFTESLNGHLCVKISEKEYRDSSIKEVNPPIVRADPNMKVWVDSYQVKKWWQL.

This is an uncharacterized protein from Escherichia coli (Bacteriophage T4).